Consider the following 185-residue polypeptide: dCTP deaminase (185 aa).

DCTP contacts are provided by residues 107–112 (KSTYAR), 131–133 (TLE), Q152, Y166, and Q176. The Proton donor/acceptor role is filled by E133.

This sequence belongs to the dCTP deaminase family. As to quaternary structure, homotrimer.

It carries out the reaction dCTP + H2O + H(+) = dUTP + NH4(+). Its pathway is pyrimidine metabolism; dUMP biosynthesis; dUMP from dCTP (dUTP route): step 1/2. In terms of biological role, catalyzes the deamination of dCTP to dUTP. The polypeptide is dCTP deaminase (Wolbachia sp. subsp. Brugia malayi (strain TRS)).